A 93-amino-acid chain; its full sequence is UPF0223 protein str0998 (93 aa).

The protein belongs to the UPF0223 family.

The chain is UPF0223 protein str0998 from Streptococcus thermophilus (strain CNRZ 1066).